Here is a 415-residue protein sequence, read N- to C-terminus: Serine/threonine transporter SstT (415 aa).

The next 8 membrane-spanning stretches (helical) occupy residues 23–43 (ILVG…AAIA), 47–67 (LGTL…LMLV), 85–105 (ILWL…LFSF), 144–164 (ALLK…GFAL), 181–201 (AVTF…FGLV), 220–240 (LMVL…LIVF), 303–323 (GAAI…GIAV), and 333–353 (VVAS…LLLI).

The protein belongs to the dicarboxylate/amino acid:cation symporter (DAACS) (TC 2.A.23) family.

The protein resides in the cell inner membrane. The catalysed reaction is L-serine(in) + Na(+)(in) = L-serine(out) + Na(+)(out). The enzyme catalyses L-threonine(in) + Na(+)(in) = L-threonine(out) + Na(+)(out). In terms of biological role, involved in the import of serine and threonine into the cell, with the concomitant import of sodium (symport system). The chain is Serine/threonine transporter SstT from Cronobacter sakazakii (strain ATCC BAA-894) (Enterobacter sakazakii).